The chain runs to 560 residues: Zorya protein ZorC (560 aa).

In terms of biological role, component of antiviral defense system Zorya type I, composed of ZorA, ZorB, ZorC and ZorD. Expression of Zorya type I in E.coli (strain MG1655) confers 10,000-fold resistance to phage SECphi27, 100-fold resistance to lambda, and 10-fold resistance to T7. While most T7 infected Zorya-containing cells undergo abortive infection, a minority produce viable phage progeny. These eventually accumulate to a high multiplicity of infection, leading to culture collapse by 2 hours after initial infection. ZorA and ZorB probably assemble in the cell inner membrane and exert their effect there. The polypeptide is Zorya protein ZorC (Escherichia coli O139:H28 (strain E24377A / ETEC)).